The sequence spans 108 residues: Circadian clock oscillator protein KaiB (108 aa).

Belongs to the KaiB family. In terms of assembly, may undergo a major conformational rearrangment; in the free state forms homooligomers. When bound to KaiC switches to a monomeric thioredoxin-fold (KaiB(fs)). The active oscillator complex is probably KaiC(6):KaiB(6).

In terms of biological role, component of the KaiBC clock protein complex, which constitutes the main circadian regulator in cyanobacteria; it may modify the ATPase activity of KaiC. May be a metamorphic protein which reversibly switches between an inactive tetrameric fold and a rare, thioredoxin-like monomeric fold (KaiB(fs)). KaiB(fs) binds phospho-KaiC, and perhaps clock output effectors. The protein is Circadian clock oscillator protein KaiB of Prochlorococcus marinus (strain MIT 9515).